Here is a 100-residue protein sequence, read N- to C-terminus: Integration host factor subunit alpha (100 aa).

It belongs to the bacterial histone-like protein family. Heterodimer of an alpha and a beta chain.

This protein is one of the two subunits of integration host factor, a specific DNA-binding protein that functions in genetic recombination as well as in transcriptional and translational control. The chain is Integration host factor subunit alpha from Ruegeria pomeroyi (strain ATCC 700808 / DSM 15171 / DSS-3) (Silicibacter pomeroyi).